Here is a 1014-residue protein sequence, read N- to C-terminus: Chondroitin sulfate ABC exolyase (1014 aa).

Residues Met-1–Ala-14 form the signal peptide. Ca(2+) contacts are provided by Ser-24, Glu-26, Asp-50, His-53, and Asp-161. Active-site proton acceptor residues include His-345 and His-454. The active-site Proton donor is Tyr-461.

The protein belongs to the polysaccharide lyase 8 family. In terms of assembly, monomer. Ca(2+) is required as a cofactor. The cofactor is Mg(2+).

Its subcellular location is the periplasm. It carries out the reaction Exolytic removal of Delta(4)-unsaturated disaccharide residues from the non-reducing ends of both polymeric chondroitin/dermatan sulfates and their oligosaccharide fragments.. Its activity is regulated as follows. Specific activity for chondroitin sulfate substrates increases moderately (2-fold) while an increase of 25-fold is observed for dermatan sulfate as substrate upon addition of Ca(2+) or Mg(2+) ions. Increasing the concentration of Na(+), K(+) or Cs(+) chloride from 0 to 0.1 M, increases the activity against all substrates. Further increases in salt concentration reduces the activity dramatically, with 50% inhibition occurring at 0.15 M and nearly complete inhibition at 0.4 M salt. The addition of 10 mM Ca(2+) or Mg(2+) ions increases the activity against chondroitin 4- and 6-sulfates by 2-3-fold, while the activity against dermatan sulfate increases much more significantly by 50-fold. Addition of Mn(2+) and Zn(2+) reduces activity against chondroitin sulfate substrates, but increases the activity against dermatan sulfate. Increasing the concentration of CaCl(2) with both chondroitin 4- and 6-sulfates from 0 to 0.04 M increases the activity. A further increase reduces activity, with 50% inhibition at 0.065-0.085 M and a complete inhibition of the reaction at 0.2 M. In case of dermatan sulfate, the addition of low concentration of CaCl(2) dramatically increases the activity from the basal level. The maximal activity is reached at 0.01 M CaCl(2). In terms of biological role, broad-specificity glycosaminoglycan lyase, which acts in an exolytic fashion degrading chondroitin sulfates and dermatan sulfate to yield only disaccharide products. Has a preference for chondroitin 4-sulfate over chondroitin 6-sulfate. Has extremely low activity against hyaluronic acid. Is not active against acharan sulfate, heparin or heparan sulfate. This is Chondroitin sulfate ABC exolyase (chonabc) from Bacteroides thetaiotaomicron.